The sequence spans 75 residues: U6-lycotoxin-Ls1e (75 aa).

Residues 1–21 (MKLLLFTALVLVVISLIEVEA) form the signal peptide. The propeptide occupies 22 to 25 (ENER).

It belongs to the neurotoxin 19 (CSTX) family. 06 (U6-Lctx) subfamily. Post-translationally, contains 4 disulfide bonds. In terms of tissue distribution, expressed by the venom gland.

Its subcellular location is the secreted. This is U6-lycotoxin-Ls1e from Lycosa singoriensis (Wolf spider).